Reading from the N-terminus, the 211-residue chain is Troponin I, cardiac muscle (211 aa).

Residues 1-24 (MADESSDAAGEPQPAPAPVRRRSS) form a disordered region. Residue Ala2 is modified to N-acetylalanine. A phosphoserine mark is found at Ser5 and Ser6. 2 positions are modified to phosphoserine; by PKA and PKD/PRKD1: Ser23 and Ser24. Tyr27 carries the post-translational modification Phosphotyrosine. Thr32 carries the post-translational modification Phosphothreonine; by STK4/MST1. Residues 33–80 (EPHAKKKSKISASRKLQLKTLMLQIAKQEMEREAEERRGEKGRVLRTR) are involved in binding TNC. 2 positions are modified to phosphoserine; by PKC/PRKCE: Ser43 and Ser45. Thr52 carries the phosphothreonine; by STK4/MST1 modification. Thr79 carries the phosphothreonine modification. Residues Thr130 and Thr144 each carry the phosphothreonine; by STK4/MST1 modification. Positions 130–151 (TQKIYDLRGKFKRPTLRRVRIS) are involved in binding TNC and actin. Ser151, Ser167, and Ser200 each carry phosphoserine.

It belongs to the troponin I family. Interacts with TRIM63. Binds to actin and tropomyosin. Interacts with STK4/MST1. In terms of processing, phosphorylated at Ser-23 and Ser-24 by PRKD1; phosphorylation reduces myofilament calcium sensitivity. Phosphorylated preferentially at Thr-32. Phosphorylation by STK4/MST1 alters its binding affinity to TNNC1 (cardiac Tn-C) and TNNT2 (cardiac Tn-T). Phosphorylated at Ser-43 and Ser-45 by PRKCE; phosphorylation increases myocardium contractile dysfunction.

Functionally, troponin I is the inhibitory subunit of troponin, the thin filament regulatory complex which confers calcium-sensitivity to striated muscle actomyosin ATPase activity. The chain is Troponin I, cardiac muscle (Tnni3) from Mus musculus (Mouse).